The chain runs to 608 residues: MGKIRKLDDALANKIAAGEVVERPASVVKELVENAIDAHSTIIEVELEEAGLAKIRVVDNGDGFEEEDCFLAFERHATSKIKDEADLFRIRTLGFRGEALPSIASVSHLELKTSTGEGPGTWLVLKGGELVQHGRTSSRKGTDITVSHLFFNTPARLKYMKTIHTELGHVVDVINRLALAHPHISFRLTHNGKQLFYTNGNGDVRQVLAAIYGLDVAKKMIAIHAETLDFTIDGYVALPEVTRASRNYMTTIVNGRYIKNYSLYKAIEEGYHTLLPIGRHPITFLNIMMDPLLIDVNVHPAKLEVRFSKETELNELVQQTIRQSFQKKTLIPEVTAPRVEKTKAEQQTFSFEHIVKESNTMSPRVTEIHRDQEKKTEERIVLEKSDEHVRDQDVTLLDVESVVPSEHVTGEMDQERIPPLYPIGQMHGTYILAQNENGLYIIDQHAAQERIKYEYFREKLATVTNELQPLLIPLTLTYSSSEYLLIESYRDQLAACGVFLEPFGHNSFIVRSHPQWFPKGEEVAIIEEMIKQVLEMKKVDMKQLREKAAIMMSCKQSIKANQFLRNDEIFALLESLRKTSDPFTCPHGRPIIIHFSTYELEKMFKRVM.

This sequence belongs to the DNA mismatch repair MutL/HexB family.

Its function is as follows. This protein is involved in the repair of mismatches in DNA. It is required for dam-dependent methyl-directed DNA mismatch repair. May act as a 'molecular matchmaker', a protein that promotes the formation of a stable complex between two or more DNA-binding proteins in an ATP-dependent manner without itself being part of a final effector complex. In Anoxybacillus flavithermus (strain DSM 21510 / WK1), this protein is DNA mismatch repair protein MutL.